The following is a 399-amino-acid chain: Homocysteine-responsive endoplasmic reticulum-resident ubiquitin-like domain member 2 protein (399 aa).

The region spanning 10-89 is the Ubiquitin-like domain; the sequence is VTLVIKAPNQ…HMVHLVCASR (80 aa). Disordered stretches follow at residues 88–144 and 211–250; these read SRTP…SIRH and ASNQSPSNGENAQPVPRPVINSESPPPNPPRAPPNVAPEM. Positions 95-106 are enriched in polar residues; the sequence is PKASTSNKSMGT. The span at 107–124 shows a compositional bias: low complexity; that stretch reads ASISRSSSEHSGSASPAS. Residues 211–221 show a composition bias toward polar residues; sequence ASNQSPSNGEN. The span at 234–246 shows a compositional bias: pro residues; that stretch reads SPPPNPPRAPPNV. The helical transmembrane segment at 299 to 319 threads the bilayer; it reads FVMVMGAMILVYMHQAGWFPL.

It is found in the membrane. In terms of biological role, could be involved in the unfolded protein response (UPR) pathway. The polypeptide is Homocysteine-responsive endoplasmic reticulum-resident ubiquitin-like domain member 2 protein (herpud2) (Xenopus tropicalis (Western clawed frog)).